The chain runs to 276 residues: uncharacterized protein (276 aa).

Tyrosine 47 serves as the catalytic Proton donor. Histidine 110 provides a ligand contact to substrate.

This sequence belongs to the aldo/keto reductase family.

It localises to the cytoplasm. Its subcellular location is the nucleus. This is an uncharacterized protein from Schizosaccharomyces pombe (strain 972 / ATCC 24843) (Fission yeast).